We begin with the raw amino-acid sequence, 278 residues long: Transmembrane protein 41B (278 aa).

Positions 1-31 (MQVHERSHTGGHTFQCNHGNEKKAPAAGKVH) are disordered. 6 helical membrane passes run 39-59 (MSLL…FLVY), 96-116 (FYVE…TFAI), 142-162 (CSGL…RPVV), 184-204 (LINY…FINI), 212-232 (PLKV…FVAI), and 249-269 (SWNS…PAIF). Residues 127–238 (GFLYPFPLAL…FVAIKAGTTL (112 aa)) form a VTT domain; required for its function in autophagy region.

It belongs to the TMEM41 family.

The protein localises to the endoplasmic reticulum membrane. The protein resides in the endomembrane system. The catalysed reaction is a 1,2-diacyl-sn-glycero-3-phospho-L-serine(in) = a 1,2-diacyl-sn-glycero-3-phospho-L-serine(out). It catalyses the reaction cholesterol(in) = cholesterol(out). It carries out the reaction a 1,2-diacyl-sn-glycero-3-phosphocholine(in) = a 1,2-diacyl-sn-glycero-3-phosphocholine(out). The enzyme catalyses a 1,2-diacyl-sn-glycero-3-phosphoethanolamine(in) = a 1,2-diacyl-sn-glycero-3-phosphoethanolamine(out). Functionally, phospholipid scramblase involved in lipid homeostasis and membrane dynamics processes. Has phospholipid scramblase activity toward cholesterol and phosphatidylserine, as well as phosphatidylethanolamine and phosphatidylcholine. Required for autophagosome formation: participates in early stages of autophagosome biogenesis at the endoplasmic reticulum (ER) membrane by reequilibrating the leaflets of the ER as lipids are extracted by atg2 (atg2a or atg2b) to mediate autophagosome assembly. In addition to autophagy, involved in other processes in which phospholipid scramblase activity is required. Required for normal motor neuron development. The protein is Transmembrane protein 41B of Xenopus laevis (African clawed frog).